Consider the following 235-residue polypeptide: Intron-encoded endonuclease I-SceI (235 aa).

Belongs to the LAGLIDADG endonuclease family. Monomer. Mg(2+) is required as a cofactor.

Its subcellular location is the mitochondrion. Functionally, mitochondrial DNA endonuclease involved in intron homing. It introduces a specific double-strand break in the DNA of the 21S rRNA gene and thus mediates the insertion of an intron, containing its own coding sequence (group I intron), into an intronless gene. Specifically recognizes and cleaves the sequence 5'-TAGGGATAACAGGGTAAT-3'. This is Intron-encoded endonuclease I-SceI (SCEI) from Saccharomyces cerevisiae (strain ATCC 204508 / S288c) (Baker's yeast).